A 122-amino-acid chain; its full sequence is Large ribosomal subunit protein uL14c (122 aa).

Belongs to the universal ribosomal protein uL14 family. As to quaternary structure, part of the 50S ribosomal subunit.

Its subcellular location is the plastid. The protein localises to the chloroplast. Binds to 23S rRNA. This Guizotia abyssinica (Niger) protein is Large ribosomal subunit protein uL14c.